The chain runs to 183 residues: Putative 3-methyladenine DNA glycosylase (183 aa).

It belongs to the DNA glycosylase MPG family.

This is Putative 3-methyladenine DNA glycosylase from Rickettsia conorii (strain ATCC VR-613 / Malish 7).